Reading from the N-terminus, the 353-residue chain is UPF0283 membrane protein YcjF (353 aa).

The segment covering 1–19 has biased composition (basic and acidic residues); the sequence is MSEPLKPRIDFAEPLKEEP. Residues 1-35 form a disordered region; the sequence is MSEPLKPRIDFAEPLKEEPTSAFKAQQTFSEAESR. 3 consecutive transmembrane segments (helical) span residues 70–90, 100–120, and 213–233; these read MVMG…VQWT, VALG…GSVV, and ESTL…FIAW.

Belongs to the UPF0283 family.

Its subcellular location is the cell inner membrane. This Salmonella newport (strain SL254) protein is UPF0283 membrane protein YcjF.